The chain runs to 111 residues: Large ribosomal subunit protein uL24 (111 aa).

It belongs to the universal ribosomal protein uL24 family. In terms of assembly, part of the 50S ribosomal subunit.

One of two assembly initiator proteins, it binds directly to the 5'-end of the 23S rRNA, where it nucleates assembly of the 50S subunit. In terms of biological role, one of the proteins that surrounds the polypeptide exit tunnel on the outside of the subunit. The protein is Large ribosomal subunit protein uL24 of Streptococcus pneumoniae (strain Hungary19A-6).